The chain runs to 231 residues: Large ribosomal subunit protein uL1 (231 aa).

It belongs to the universal ribosomal protein uL1 family. In terms of assembly, part of the 50S ribosomal subunit.

In terms of biological role, binds directly to 23S rRNA. The L1 stalk is quite mobile in the ribosome, and is involved in E site tRNA release. Its function is as follows. Protein L1 is also a translational repressor protein, it controls the translation of the L11 operon by binding to its mRNA. In Pseudomonas putida (strain ATCC 700007 / DSM 6899 / JCM 31910 / BCRC 17059 / LMG 24140 / F1), this protein is Large ribosomal subunit protein uL1.